The chain runs to 159 residues: Ribosomal RNA large subunit methyltransferase H (159 aa).

Residues Leu-76, Gly-108, and 127 to 132 (FSKMTF) each bind S-adenosyl-L-methionine.

It belongs to the RNA methyltransferase RlmH family. As to quaternary structure, homodimer.

Its subcellular location is the cytoplasm. It carries out the reaction pseudouridine(1915) in 23S rRNA + S-adenosyl-L-methionine = N(3)-methylpseudouridine(1915) in 23S rRNA + S-adenosyl-L-homocysteine + H(+). Specifically methylates the pseudouridine at position 1915 (m3Psi1915) in 23S rRNA. The polypeptide is Ribosomal RNA large subunit methyltransferase H (Clostridium novyi (strain NT)).